A 510-amino-acid polypeptide reads, in one-letter code: Probable sphingolipid transporter spinster homolog 3 (510 aa).

The chain crosses the membrane as a helical span at residues 44-64 (SSLSPVWLLVIFCIINLLNYM). N-linked (GlcNAc...) asparagine glycans are attached at residues Asn75 and Asn98. 11 consecutive transmembrane segments (helical) span residues 106-126 (VLSS…ASLA), 136-156 (VWTI…IVLC), 158-178 (MFVG…IDDN), 185-205 (AAWL…GYVY), 219-239 (FWGE…MKPL), 298-318 (VFVV…AYSY), 336-356 (IFGA…GFIL), 369-387 (LLSG…AFTL), 392-414 (GFIA…VNYV), 430-450 (ISTV…VGIV), and 462-482 (LILT…KINL).

It belongs to the major facilitator superfamily. Spinster (TC 2.A.1.49) family.

It localises to the mitochondrion inner membrane. Functionally, probable sphingolipid transporter. The polypeptide is Probable sphingolipid transporter spinster homolog 3 (Arabidopsis thaliana (Mouse-ear cress)).